Reading from the N-terminus, the 485-residue chain is NADH-quinone oxidoreductase subunit N (485 aa).

The next 14 membrane-spanning stretches (helical) occupy residues 8–28, 35–55, 71–91, 105–125, 127–147, 159–179, 203–223, 235–255, 271–291, 297–317, 326–346, 373–393, 408–430, and 455–475; these read LIALLPLLIVGLTVVVVMLSI, FLNATLSVIGLNAALVSLWFV, GFAMLYTGLVLLASLATCTFA, FYLLVLIAALGGILLANANHL, SLFLGIELISLPLFGLVGYAF, YTILSAAASSFLLFGMALVYA, LLAGFGLMIVGLGFKLSLVPF, PAPVSTFLATASKIAIFGVVM, VVLAIIAFASIIFGNLMALSQ, LLGYSSISHLGYLLVALIALQ, VGVYLVGYLFSSLGAFGVVSL, AAVMTVMMLSLAGIPMTLGFI, WWLVGAVVVGSAIGLYYYLRVAV, and IVVLISALLVLVLGVWPQPLI.

The protein belongs to the complex I subunit 2 family. NDH-1 is composed of 13 different subunits. Subunits NuoA, H, J, K, L, M, N constitute the membrane sector of the complex.

Its subcellular location is the cell inner membrane. The enzyme catalyses a quinone + NADH + 5 H(+)(in) = a quinol + NAD(+) + 4 H(+)(out). In terms of biological role, NDH-1 shuttles electrons from NADH, via FMN and iron-sulfur (Fe-S) centers, to quinones in the respiratory chain. The immediate electron acceptor for the enzyme in this species is believed to be ubiquinone. Couples the redox reaction to proton translocation (for every two electrons transferred, four hydrogen ions are translocated across the cytoplasmic membrane), and thus conserves the redox energy in a proton gradient. The polypeptide is NADH-quinone oxidoreductase subunit N (Escherichia coli O6:K15:H31 (strain 536 / UPEC)).